Here is a 196-residue protein sequence, read N- to C-terminus: uncharacterized protein (196 aa).

The N-terminal stretch at 1 to 27 (MSVLSRAVQLAFVALGLCLFFSNLVAA) is a signal peptide.

It is found in the secreted. This is an uncharacterized protein from Arthroderma benhamiae (strain ATCC MYA-4681 / CBS 112371) (Trichophyton mentagrophytes).